A 500-amino-acid chain; its full sequence is Archaeal-type glutamate synthase [NADPH] (500 aa).

4Fe-4S ferredoxin-type domains follow at residues 7–38 (SKFIVDRIEDRCIKCKVCITQCSFDTHYYDED) and 40–69 (DQIKVRNQNCVGCHRCVTFCPTNALVVRNN). The [4Fe-4S] cluster site is built by Cys-18, Cys-21, Cys-24, Cys-28, Cys-49, Cys-52, Cys-55, and Cys-59.

It belongs to the glutamate synthase family. The cofactor is FMN.

The catalysed reaction is 2 L-glutamate + NADP(+) = L-glutamine + 2-oxoglutarate + NADPH + H(+). This chain is Archaeal-type glutamate synthase [NADPH], found in Dehalococcoides mccartyi (strain ATCC BAA-2266 / KCTC 15142 / 195) (Dehalococcoides ethenogenes (strain 195)).